The primary structure comprises 237 residues: Mitochondrial inner membrane protease atp23 (237 aa).

Residues 1 to 18 show a composition bias toward polar residues; it reads MSTSESSNNGSQPGNQDT. Positions 1–24 are disordered; it reads MSTSESSNNGSQPGNQDTGYIPGD. Histidine 136 is a binding site for a divalent metal cation. Glutamate 137 is a catalytic residue. Histidine 140 is an a divalent metal cation binding site.

Belongs to the peptidase M76 family.

It is found in the mitochondrion inner membrane. In terms of biological role, has a dual role in the assembly of mitochondrial ATPase. Acts as a protease that removes N-terminal residues of mitochondrial ATPase CF(0) subunit 6 at the intermembrane space side. Also involved in the correct assembly of the membrane-embedded ATPase CF(0) particle, probably mediating association of subunit 6 with the subunit 9 ring. The chain is Mitochondrial inner membrane protease atp23 (atp23) from Aspergillus niger (strain ATCC MYA-4892 / CBS 513.88 / FGSC A1513).